We begin with the raw amino-acid sequence, 56 residues long: Large ribosomal subunit protein bL33B (56 aa).

This sequence belongs to the bacterial ribosomal protein bL33 family.

The chain is Large ribosomal subunit protein bL33B from Cutibacterium acnes (strain DSM 16379 / KPA171202) (Propionibacterium acnes).